The chain runs to 677 residues: Transmembrane and coiled-coil domain-containing protein 3 (677 aa).

The first 22 residues, 1-22, serve as a signal peptide directing secretion; it reads MKVLGRSFFWVLFPVLPWAVQA. A coiled-coil region spans residues 124-204; that stretch reads DYKDVVNMKE…EEEIEEHAFD (81 aa). N-linked (GlcNAc...) asparagine glycosylation is found at asparagine 206 and asparagine 230. The next 10 membrane-spanning stretches (helical) occupy residues 286–306, 317–337, 350–370, 416–436, 456–476, 498–518, 554–574, 578–598, 608–628, and 640–660; these read WLCT…GVLL, IVQV…LVGL, ISLQ…LLWG, VLLG…AVMP, ILVL…LCLV, EILI…TELL, FLAI…FVAY, VLVF…ALVL, YIKW…FVLG, and EVYL…PVLW.

It belongs to the monovalent cation:proton antiporter 2 (CPA2) transporter (TC 2.A.37) family. Expressed in the cornea, lens capsule and choroid-retinal pigment epithelium (at protein level).

It is found in the membrane. Its function is as follows. Probable Na(+)/H(+) antiporter. The protein is Transmembrane and coiled-coil domain-containing protein 3 (TMCO3) of Homo sapiens (Human).